We begin with the raw amino-acid sequence, 315 residues long: GTPase Era (315 aa).

An Era-type G domain is found at 21–190 (RSGFVAIVGR…QSALEARLDP (170 aa)). Residues 29 to 36 (GRPNVGKS) are G1. A GTP-binding site is contributed by 29–36 (GRPNVGKS). Positions 55 to 59 (QTTRN) are G2. Residues 76–79 (DTPG) are G3. GTP is bound by residues 76–80 (DTPGI) and 138–141 (NKQD). The G4 stretch occupies residues 138-141 (NKQD). A G5 region spans residues 169-171 (FSA). The 77-residue stretch at 221-297 (TRQEVPHSVA…YLKLFVKVEP (77 aa)) folds into the KH type-2 domain.

This sequence belongs to the TRAFAC class TrmE-Era-EngA-EngB-Septin-like GTPase superfamily. Era GTPase family. As to quaternary structure, monomer.

The protein resides in the cytoplasm. It localises to the cell inner membrane. Its function is as follows. An essential GTPase that binds both GDP and GTP, with rapid nucleotide exchange. Plays a role in 16S rRNA processing and 30S ribosomal subunit biogenesis and possibly also in cell cycle regulation and energy metabolism. This chain is GTPase Era, found in Synechocystis sp. (strain ATCC 27184 / PCC 6803 / Kazusa).